The sequence spans 400 residues: Spaetzle-processing enzyme (400 aa).

A signal peptide spans 1-27; sequence MASTERNFLLLSLVVSALSGLVHRSDA. In terms of domain architecture, Clip spans 34 to 94; that stretch reads SCTPQQSDER…GLVNRILVCC (61 aa). Intrachain disulfides connect cysteine 35–cysteine 93, cysteine 46–cysteine 77, cysteine 52–cysteine 94, cysteine 127–cysteine 269, cysteine 166–cysteine 182, and cysteine 211–cysteine 221. The 265-residue stretch at 135-399 folds into the Peptidase S1 domain; that stretch reads IFGGTNTTLW…FIDWIKQKLE (265 aa). An N-linked (GlcNAc...) asparagine glycan is attached at asparagine 140. Catalysis depends on histidine 181, which acts as the Charge relay system. Residues glutamate 202, aspartate 204, threonine 207, and aspartate 210 each coordinate Ca(2+). Residue aspartate 249 is the Charge relay system of the active site. N-linked (GlcNAc...) asparagine glycosylation is present at asparagine 311. Disulfide bonds link cysteine 315-cysteine 332 and cysteine 342-cysteine 375. Serine 346 acts as the Charge relay system in catalysis.

This sequence belongs to the peptidase S1 family. CLIP subfamily. In terms of assembly, in the active form, heterodimer of a light chain and a heavy chain; disulfide-linked. Proteolytically cleaved in response to Gram-negative bacterial or fungal infection; processing is likely to result in its activation. Cleavage produces a light chain containing the CLIP domain and a catalytic heavy chain which remain covalently associated through an interchain disulfide bond.

It localises to the secreted. Its function is as follows. Endopeptidase which plays a key role in innate immunity by cleaving Tl ligand spz and thereby activating the Toll pathway in response to fungal and Gram-positive bacterial infections. Acts downstream of pathogen recognition receptors PGRP-SA and GNBP1 and protease grass in response to Gram-positive bacterial infection. Acts downstream of protease psh in response to fungal infection. This Drosophila melanogaster (Fruit fly) protein is Spaetzle-processing enzyme.